A 446-amino-acid polypeptide reads, in one-letter code: Histidine--tRNA ligase (446 aa).

It belongs to the class-II aminoacyl-tRNA synthetase family. As to quaternary structure, homodimer.

It is found in the cytoplasm. The enzyme catalyses tRNA(His) + L-histidine + ATP = L-histidyl-tRNA(His) + AMP + diphosphate + H(+). In Paraburkholderia phytofirmans (strain DSM 17436 / LMG 22146 / PsJN) (Burkholderia phytofirmans), this protein is Histidine--tRNA ligase.